The chain runs to 248 residues: Probable aquaporin TIP2-1 (248 aa).

2 consecutive transmembrane segments (helical) span residues 20-40 (AYVA…GSAI) and 54-74 (AGLV…VSVA). Positions 83-85 (NPA) match the NPA 1 motif. Transmembrane regions (helical) follow at residues 97-119 (TILT…CLLL), 141-161 (GVVM…ATAA), and 168-188 (LGTI…LAAG). The NPA 2 motif lies at 196–198 (NPA). Residues 217–237 (WVGPLIGGGLAGLVYGDVFIG) form a helical membrane-spanning segment.

The protein belongs to the MIP/aquaporin (TC 1.A.8) family. TIP (TC 1.A.8.10) subfamily. Expressed in roots and anthers.

Its subcellular location is the vacuole membrane. Aquaporins facilitate the transport of water and small neutral solutes across cell membranes. May be involved in transport from the vacuolar compartment to the cytoplasm. The sequence is that of Probable aquaporin TIP2-1 (TIP2-1) from Oryza sativa subsp. japonica (Rice).